Reading from the N-terminus, the 435-residue chain is Putative GMP synthase [glutamine-hydrolyzing] 2 (435 aa).

The Glutamine amidotransferase type-1; truncated domain occupies methionine 1–asparagine 120. Residues tryptophan 121–arginine 310 enclose the GMPS ATP-PPase domain. Serine 148 to serine 154 is an ATP binding site.

In terms of assembly, homodimer.

The catalysed reaction is XMP + L-glutamine + ATP + H2O = GMP + L-glutamate + AMP + diphosphate + 2 H(+). It participates in purine metabolism; GMP biosynthesis; GMP from XMP (L-Gln route): step 1/1. Catalyzes the synthesis of GMP from XMP. The sequence is that of Putative GMP synthase [glutamine-hydrolyzing] 2 (guaA2) from Bacteroides thetaiotaomicron (strain ATCC 29148 / DSM 2079 / JCM 5827 / CCUG 10774 / NCTC 10582 / VPI-5482 / E50).